We begin with the raw amino-acid sequence, 205 residues long: Small ribosomal subunit protein uS4 (205 aa).

Residues 94–154 (SRLDNSVYRA…TRKDGKIRKN (61 aa)) enclose the S4 RNA-binding domain.

This sequence belongs to the universal ribosomal protein uS4 family. Part of the 30S ribosomal subunit. Contacts protein S5. The interaction surface between S4 and S5 is involved in control of translational fidelity.

One of the primary rRNA binding proteins, it binds directly to 16S rRNA where it nucleates assembly of the body of the 30S subunit. Its function is as follows. With S5 and S12 plays an important role in translational accuracy. The protein is Small ribosomal subunit protein uS4 of Mesomycoplasma hyopneumoniae (strain 232) (Mycoplasma hyopneumoniae).